Here is a 426-residue protein sequence, read N- to C-terminus: Glutamate-1-semialdehyde 2,1-aminomutase (426 aa).

Residue Lys-265 is modified to N6-(pyridoxal phosphate)lysine.

This sequence belongs to the class-III pyridoxal-phosphate-dependent aminotransferase family. HemL subfamily. As to quaternary structure, homodimer. Pyridoxal 5'-phosphate is required as a cofactor.

Its subcellular location is the cytoplasm. It carries out the reaction (S)-4-amino-5-oxopentanoate = 5-aminolevulinate. Its pathway is porphyrin-containing compound metabolism; protoporphyrin-IX biosynthesis; 5-aminolevulinate from L-glutamyl-tRNA(Glu): step 2/2. This Escherichia coli (strain K12 / DH10B) protein is Glutamate-1-semialdehyde 2,1-aminomutase.